The following is a 257-amino-acid chain: Imidazole glycerol phosphate synthase subunit HisF (257 aa).

Active-site residues include aspartate 11 and aspartate 130.

It belongs to the HisA/HisF family. Heterodimer of HisH and HisF.

The protein resides in the cytoplasm. The enzyme catalyses 5-[(5-phospho-1-deoxy-D-ribulos-1-ylimino)methylamino]-1-(5-phospho-beta-D-ribosyl)imidazole-4-carboxamide + L-glutamine = D-erythro-1-(imidazol-4-yl)glycerol 3-phosphate + 5-amino-1-(5-phospho-beta-D-ribosyl)imidazole-4-carboxamide + L-glutamate + H(+). It participates in amino-acid biosynthesis; L-histidine biosynthesis; L-histidine from 5-phospho-alpha-D-ribose 1-diphosphate: step 5/9. In terms of biological role, IGPS catalyzes the conversion of PRFAR and glutamine to IGP, AICAR and glutamate. The HisF subunit catalyzes the cyclization activity that produces IGP and AICAR from PRFAR using the ammonia provided by the HisH subunit. The chain is Imidazole glycerol phosphate synthase subunit HisF from Shewanella putrefaciens (strain CN-32 / ATCC BAA-453).